A 359-amino-acid polypeptide reads, in one-letter code: Photosystem II protein D1 3 (359 aa).

3 helical membrane-spanning segments follow: residues 29–46 (YVGW…AATI), 118–133 (HFLI…EWEL), and 142–156 (WICV…AASA). Histidine 118 contributes to the chlorophyll a binding site. Tyrosine 126 provides a ligand contact to pheophytin a. [CaMn4O5] cluster contacts are provided by aspartate 170 and glutamate 189. The helical transmembrane segment at 197 to 218 (FHMLGVAGVFGGSLFSAMHGSL) threads the bilayer. Histidine 198 contributes to the chlorophyll a binding site. Residues histidine 215 and 264-265 (SF) each bind a quinone. Histidine 215 contacts Fe cation. Histidine 272 serves as a coordination point for Fe cation. The helical transmembrane segment at 274–288 (FLAAWPVVGIWFTAL) threads the bilayer. Histidine 332, glutamate 333, aspartate 342, and alanine 344 together coordinate [CaMn4O5] cluster. A propeptide spanning residues 345-359 (AAESTPVALQVPAIG) is cleaved from the precursor.

The protein belongs to the reaction center PufL/M/PsbA/D family. In terms of assembly, PSII is composed of 1 copy each of membrane proteins PsbA, PsbB, PsbC, PsbD, PsbE, PsbF, PsbH, PsbI, PsbJ, PsbK, PsbL, PsbM, PsbT, PsbX, PsbY, PsbZ, Psb30/Ycf12, peripheral proteins PsbO, CyanoQ (PsbQ), PsbU, PsbV and a large number of cofactors. It forms dimeric complexes. The cofactor is The D1/D2 heterodimer binds P680, chlorophylls that are the primary electron donor of PSII, and subsequent electron acceptors. It shares a non-heme iron and each subunit binds pheophytin, quinone, additional chlorophylls, carotenoids and lipids. D1 provides most of the ligands for the Mn4-Ca-O5 cluster of the oxygen-evolving complex (OEC). There is also a Cl(-1) ion associated with D1 and D2, which is required for oxygen evolution. The PSII complex binds additional chlorophylls, carotenoids and specific lipids.. Post-translationally, tyr-161 forms a radical intermediate that is referred to as redox-active TyrZ, YZ or Y-Z. In terms of processing, C-terminally processed by CtpA; processing is essential to allow assembly of the oxygen-evolving complex and thus photosynthetic growth.

The protein localises to the cellular thylakoid membrane. The enzyme catalyses 2 a plastoquinone + 4 hnu + 2 H2O = 2 a plastoquinol + O2. Photosystem II (PSII) is a light-driven water:plastoquinone oxidoreductase that uses light energy to abstract electrons from H(2)O, generating O(2) and a proton gradient subsequently used for ATP formation. It consists of a core antenna complex that captures photons, and an electron transfer chain that converts photonic excitation into a charge separation. The D1/D2 (PsbA/PsbD) reaction center heterodimer binds P680, the primary electron donor of PSII as well as several subsequent electron acceptors. This chain is Photosystem II protein D1 3, found in Parasynechococcus marenigrum (strain WH8102).